An 88-amino-acid polypeptide reads, in one-letter code: Large ribosomal subunit protein eL34 (88 aa).

Residues 41–72 (RPLNGIPRGRPNELRKLPKTKKRPERPMPNLC) form a disordered region.

This sequence belongs to the eukaryotic ribosomal protein eL34 family.

The sequence is that of Large ribosomal subunit protein eL34 from Thermococcus sibiricus (strain DSM 12597 / MM 739).